Consider the following 239-residue polypeptide: 4-hydroxy-tetrahydrodipicolinate reductase (239 aa).

Residues 12-17, 94-96, and 118-121 contribute to the NAD(+) site; these read GASGRM, GTT, and ASNF. H150 acts as the Proton donor/acceptor in catalysis. Position 151 (H151) interacts with (S)-2,3,4,5-tetrahydrodipicolinate. The Proton donor role is filled by K154. (S)-2,3,4,5-tetrahydrodipicolinate is bound at residue 160–161; sequence GT.

Belongs to the DapB family.

It is found in the cytoplasm. The catalysed reaction is (S)-2,3,4,5-tetrahydrodipicolinate + NAD(+) + H2O = (2S,4S)-4-hydroxy-2,3,4,5-tetrahydrodipicolinate + NADH + H(+). The enzyme catalyses (S)-2,3,4,5-tetrahydrodipicolinate + NADP(+) + H2O = (2S,4S)-4-hydroxy-2,3,4,5-tetrahydrodipicolinate + NADPH + H(+). It functions in the pathway amino-acid biosynthesis; L-lysine biosynthesis via DAP pathway; (S)-tetrahydrodipicolinate from L-aspartate: step 4/4. Functionally, catalyzes the conversion of 4-hydroxy-tetrahydrodipicolinate (HTPA) to tetrahydrodipicolinate. This is 4-hydroxy-tetrahydrodipicolinate reductase from Stenotrophomonas maltophilia (strain R551-3).